A 199-amino-acid chain; its full sequence is Probable nicotinate-nucleotide adenylyltransferase (199 aa).

This sequence belongs to the NadD family.

The enzyme catalyses nicotinate beta-D-ribonucleotide + ATP + H(+) = deamido-NAD(+) + diphosphate. The protein operates within cofactor biosynthesis; NAD(+) biosynthesis; deamido-NAD(+) from nicotinate D-ribonucleotide: step 1/1. Its function is as follows. Catalyzes the reversible adenylation of nicotinate mononucleotide (NaMN) to nicotinic acid adenine dinucleotide (NaAD). In Rhizobium johnstonii (strain DSM 114642 / LMG 32736 / 3841) (Rhizobium leguminosarum bv. viciae), this protein is Probable nicotinate-nucleotide adenylyltransferase.